Here is a 154-residue protein sequence, read N- to C-terminus: UPF0756 membrane protein EAT1b_0668 (154 aa).

Transmembrane regions (helical) follow at residues L5–A25, W52–F72, P82–V102, V107–K127, and I129–V149.

The protein belongs to the UPF0756 family.

The protein localises to the cell membrane. The chain is UPF0756 membrane protein EAT1b_0668 from Exiguobacterium sp. (strain ATCC BAA-1283 / AT1b).